The following is a 161-amino-acid chain: Small ribosomal subunit protein uS9 (161 aa).

The protein belongs to the universal ribosomal protein uS9 family.

The protein is Small ribosomal subunit protein uS9 (rpsI) of Rickettsia prowazekii (strain Madrid E).